Reading from the N-terminus, the 174-residue chain is Chorion class CB protein M5H4 (174 aa).

An N-terminal signal peptide occupies residues 1–20; the sequence is MTTIVVLICASALFVQLAFS. The left arm stretch occupies residues 21–71; sequence QCLGRDPVIGFGGAYGSGWGGYDAISPYDGLGYGVPYSAGFIGLSPSNLAA. Residues 72–142 form a central domain region; it reads SCGGALAVNS…GDGAIGIVSE (71 aa). The interval 143-174 is right arm; it reads APIVAPASIGYGQWPVNAGYKGIGPCGCGGLY.

It belongs to the chorion protein family.

In terms of biological role, this protein is one of many from the eggshell of the silk moth. This chain is Chorion class CB protein M5H4, found in Bombyx mori (Silk moth).